Here is a 118-residue protein sequence, read N- to C-terminus: Holo-[acyl-carrier-protein] synthase (118 aa).

Asp-8 and Glu-58 together coordinate Mg(2+).

This sequence belongs to the P-Pant transferase superfamily. AcpS family. Requires Mg(2+) as cofactor.

The protein localises to the cytoplasm. It carries out the reaction apo-[ACP] + CoA = holo-[ACP] + adenosine 3',5'-bisphosphate + H(+). In terms of biological role, transfers the 4'-phosphopantetheine moiety from coenzyme A to a Ser of acyl-carrier-protein. The polypeptide is Holo-[acyl-carrier-protein] synthase (Streptococcus uberis (strain ATCC BAA-854 / 0140J)).